The primary structure comprises 291 residues: Diaminopimelate epimerase (291 aa).

Positions 11 and 78 each coordinate substrate. Cysteine 87 acts as the Proton donor in catalysis. Residues 88 to 89 (GN), asparagine 166, asparagine 200, and 218 to 219 (ER) contribute to the substrate site. The active-site Proton acceptor is cysteine 227. 228–229 (GT) lines the substrate pocket.

Belongs to the diaminopimelate epimerase family. Homodimer.

It is found in the cytoplasm. The catalysed reaction is (2S,6S)-2,6-diaminopimelate = meso-2,6-diaminopimelate. It functions in the pathway amino-acid biosynthesis; L-lysine biosynthesis via DAP pathway; DL-2,6-diaminopimelate from LL-2,6-diaminopimelate: step 1/1. Functionally, catalyzes the stereoinversion of LL-2,6-diaminopimelate (L,L-DAP) to meso-diaminopimelate (meso-DAP), a precursor of L-lysine and an essential component of the bacterial peptidoglycan. In Mycolicibacterium smegmatis (strain ATCC 700084 / mc(2)155) (Mycobacterium smegmatis), this protein is Diaminopimelate epimerase.